The chain runs to 310 residues: ADP-L-glycero-D-manno-heptose-6-epimerase (310 aa).

NADP(+) is bound by residues 10-11 (FI), 31-32 (DN), Lys-38, Lys-53, 75-79 (EGACS), and Asn-92. The Proton acceptor role is filled by Tyr-140. Lys-144 serves as a coordination point for NADP(+). Asn-169 serves as a coordination point for substrate. Residues Val-170 and Lys-178 each coordinate NADP(+). Residue Lys-178 is the Proton acceptor of the active site. Substrate contacts are provided by residues Ser-180, His-187, 201 to 204 (FEGS), Arg-209, and Tyr-272.

It belongs to the NAD(P)-dependent epimerase/dehydratase family. HldD subfamily. As to quaternary structure, homopentamer. Requires NADP(+) as cofactor.

It catalyses the reaction ADP-D-glycero-beta-D-manno-heptose = ADP-L-glycero-beta-D-manno-heptose. The protein operates within nucleotide-sugar biosynthesis; ADP-L-glycero-beta-D-manno-heptose biosynthesis; ADP-L-glycero-beta-D-manno-heptose from D-glycero-beta-D-manno-heptose 7-phosphate: step 4/4. In terms of biological role, catalyzes the interconversion between ADP-D-glycero-beta-D-manno-heptose and ADP-L-glycero-beta-D-manno-heptose via an epimerization at carbon 6 of the heptose. In Salmonella newport (strain SL254), this protein is ADP-L-glycero-D-manno-heptose-6-epimerase.